Here is a 234-residue protein sequence, read N- to C-terminus: Phosphoribosylaminoimidazole-succinocarboxamide synthase (234 aa).

The protein belongs to the SAICAR synthetase family.

The enzyme catalyses 5-amino-1-(5-phospho-D-ribosyl)imidazole-4-carboxylate + L-aspartate + ATP = (2S)-2-[5-amino-1-(5-phospho-beta-D-ribosyl)imidazole-4-carboxamido]succinate + ADP + phosphate + 2 H(+). The protein operates within purine metabolism; IMP biosynthesis via de novo pathway; 5-amino-1-(5-phospho-D-ribosyl)imidazole-4-carboxamide from 5-amino-1-(5-phospho-D-ribosyl)imidazole-4-carboxylate: step 1/2. In Streptococcus agalactiae serotype III (strain NEM316), this protein is Phosphoribosylaminoimidazole-succinocarboxamide synthase.